The following is a 620-amino-acid chain: DNA mismatch repair protein MutL (620 aa).

The disordered stretch occupies residues 353-375 (SRANGANDFTGRPFSGTERPRGG).

Belongs to the DNA mismatch repair MutL/HexB family.

In terms of biological role, this protein is involved in the repair of mismatches in DNA. It is required for dam-dependent methyl-directed DNA mismatch repair. May act as a 'molecular matchmaker', a protein that promotes the formation of a stable complex between two or more DNA-binding proteins in an ATP-dependent manner without itself being part of a final effector complex. The sequence is that of DNA mismatch repair protein MutL from Chelativorans sp. (strain BNC1).